A 299-amino-acid polypeptide reads, in one-letter code: Recombination-associated protein RdgC (299 aa).

The protein belongs to the RdgC family.

It localises to the cytoplasm. It is found in the nucleoid. May be involved in recombination. The chain is Recombination-associated protein RdgC from Neisseria meningitidis serogroup C (strain 053442).